A 241-amino-acid chain; its full sequence is Large ribosomal subunit protein uL3 (241 aa).

Disordered regions lie at residues 139–166 (VSHRSIGSTGGRQDPGKTFKNKKMPGHM) and 209–241 (KKPLPKDAPKPGKFKVAGDDKVTADAPTEKEGA). Q151 is modified (N5-methylglutamine).

Belongs to the universal ribosomal protein uL3 family. As to quaternary structure, part of the 50S ribosomal subunit. Forms a cluster with proteins L14 and L19. Methylated by PrmB.

One of the primary rRNA binding proteins, it binds directly near the 3'-end of the 23S rRNA, where it nucleates assembly of the 50S subunit. This is Large ribosomal subunit protein uL3 from Nitrobacter hamburgensis (strain DSM 10229 / NCIMB 13809 / X14).